The chain runs to 91 residues: Small ribosomal subunit protein bS20 (91 aa).

Residues 1-28 (MPNIKSAIKRTKTIEKRRAHRASQKSDL) are disordered. Basic residues predominate over residues 7-23 (AIKRTKTIEKRRAHRAS).

This sequence belongs to the bacterial ribosomal protein bS20 family.

Binds directly to 16S ribosomal RNA. The polypeptide is Small ribosomal subunit protein bS20 (Brevibacillus brevis (strain 47 / JCM 6285 / NBRC 100599)).